The chain runs to 206 residues: GTP cyclohydrolase 1 (206 aa).

3 residues coordinate Zn(2+): cysteine 98, histidine 101, and cysteine 169.

It belongs to the GTP cyclohydrolase I family. In terms of assembly, toroid-shaped homodecamer, composed of two pentamers of five dimers.

It catalyses the reaction GTP + H2O = 7,8-dihydroneopterin 3'-triphosphate + formate + H(+). It participates in cofactor biosynthesis; 7,8-dihydroneopterin triphosphate biosynthesis; 7,8-dihydroneopterin triphosphate from GTP: step 1/1. In Helicobacter hepaticus (strain ATCC 51449 / 3B1), this protein is GTP cyclohydrolase 1.